The following is a 236-amino-acid chain: 2,3,4,5-tetrahydropyridine-2,6-dicarboxylate N-acetyltransferase (236 aa).

Belongs to the transferase hexapeptide repeat family. DapH subfamily.

It carries out the reaction (S)-2,3,4,5-tetrahydrodipicolinate + acetyl-CoA + H2O = L-2-acetamido-6-oxoheptanedioate + CoA. It functions in the pathway amino-acid biosynthesis; L-lysine biosynthesis via DAP pathway; LL-2,6-diaminopimelate from (S)-tetrahydrodipicolinate (acetylase route): step 1/3. Catalyzes the transfer of an acetyl group from acetyl-CoA to tetrahydrodipicolinate. The chain is 2,3,4,5-tetrahydropyridine-2,6-dicarboxylate N-acetyltransferase from Limosilactobacillus reuteri (strain DSM 20016) (Lactobacillus reuteri).